The chain runs to 98 residues: uncharacterized protein (98 aa).

Transmembrane regions (helical) follow at residues 8–28 and 73–93; these read LILK…HYFL and LWFI…SISL.

The protein localises to the membrane. This is an uncharacterized protein from Saccharomyces cerevisiae (strain ATCC 204508 / S288c) (Baker's yeast).